The chain runs to 76 residues: Exodeoxyribonuclease 7 small subunit (76 aa).

This sequence belongs to the XseB family. As to quaternary structure, heterooligomer composed of large and small subunits.

The protein localises to the cytoplasm. It catalyses the reaction Exonucleolytic cleavage in either 5'- to 3'- or 3'- to 5'-direction to yield nucleoside 5'-phosphates.. Bidirectionally degrades single-stranded DNA into large acid-insoluble oligonucleotides, which are then degraded further into small acid-soluble oligonucleotides. This Geobacter metallireducens (strain ATCC 53774 / DSM 7210 / GS-15) protein is Exodeoxyribonuclease 7 small subunit.